The sequence spans 278 residues: Ribosomal RNA small subunit methyltransferase A (278 aa).

S-adenosyl-L-methionine-binding residues include Asn-28, Leu-30, Gly-55, Glu-77, Asp-103, and Asn-122.

This sequence belongs to the class I-like SAM-binding methyltransferase superfamily. rRNA adenine N(6)-methyltransferase family. RsmA subfamily.

The protein localises to the cytoplasm. It carries out the reaction adenosine(1518)/adenosine(1519) in 16S rRNA + 4 S-adenosyl-L-methionine = N(6)-dimethyladenosine(1518)/N(6)-dimethyladenosine(1519) in 16S rRNA + 4 S-adenosyl-L-homocysteine + 4 H(+). Specifically dimethylates two adjacent adenosines (A1518 and A1519) in the loop of a conserved hairpin near the 3'-end of 16S rRNA in the 30S particle. May play a critical role in biogenesis of 30S subunits. This Cereibacter sphaeroides (strain ATCC 17029 / ATH 2.4.9) (Rhodobacter sphaeroides) protein is Ribosomal RNA small subunit methyltransferase A.